The primary structure comprises 401 residues: Acetate kinase (401 aa).

Mg(2+) is bound at residue asparagine 9. Lysine 16 is a binding site for ATP. Position 88 (arginine 88) interacts with substrate. The Proton donor/acceptor role is filled by aspartate 147. ATP is bound by residues 207 to 211, 282 to 284, and 333 to 337; these read HLGNG, DCR, and GIGEN. Glutamate 388 is a Mg(2+) binding site.

The protein belongs to the acetokinase family. As to quaternary structure, homodimer. It depends on Mg(2+) as a cofactor. Mn(2+) serves as cofactor.

It localises to the cytoplasm. It carries out the reaction acetate + ATP = acetyl phosphate + ADP. It participates in metabolic intermediate biosynthesis; acetyl-CoA biosynthesis; acetyl-CoA from acetate: step 1/2. Catalyzes the formation of acetyl phosphate from acetate and ATP. Can also catalyze the reverse reaction. The polypeptide is Acetate kinase (Haemophilus influenzae (strain ATCC 51907 / DSM 11121 / KW20 / Rd)).